Reading from the N-terminus, the 200-residue chain is 3-isopropylmalate dehydratase small subunit (200 aa).

This sequence belongs to the LeuD family. LeuD type 1 subfamily. Heterodimer of LeuC and LeuD.

It catalyses the reaction (2R,3S)-3-isopropylmalate = (2S)-2-isopropylmalate. It participates in amino-acid biosynthesis; L-leucine biosynthesis; L-leucine from 3-methyl-2-oxobutanoate: step 2/4. Catalyzes the isomerization between 2-isopropylmalate and 3-isopropylmalate, via the formation of 2-isopropylmaleate. This is 3-isopropylmalate dehydratase small subunit from Campylobacter jejuni subsp. doylei (strain ATCC BAA-1458 / RM4099 / 269.97).